Consider the following 277-residue polypeptide: WRKY transcription factor 68 (277 aa).

Residues 51–96 (TPLMHFPTTPNSSSSEAVNGDDEEEEDGEEQQHKTKKRFKFTKMSR) are disordered. Residues 58-67 (TTPNSSSSEA) are compositionally biased toward polar residues. Residues 69-79 (NGDDEEEEDGE) show a composition bias toward acidic residues. A compositionally biased stretch (basic residues) spans 84 to 96 (KTKKRFKFTKMSR). A DNA-binding region (WRKY) is located at residues 112-177 (SEVLHLDDGY…YEGQHTHPRP (66 aa)). The interval 183–206 (KEGSSPSNGSASRAHIGLPTLPPQ) is disordered.

Belongs to the WRKY group II-c family.

Its subcellular location is the nucleus. Functionally, transcription factor. Interacts specifically with the W box (5'-(T)TGAC[CT]-3'), a frequently occurring elicitor-responsive cis-acting element. This is WRKY transcription factor 68 (WRKY68) from Arabidopsis thaliana (Mouse-ear cress).